The following is a 274-amino-acid chain: GPN-loop GTPase 3 (274 aa).

A GTP-binding site is contributed by 13 to 18; that stretch reads GVGKST. Residues 70–72 carry the Gly-Pro-Asn (GPN)-loop; involved in dimer interface motif; sequence GPN. 173-176 contacts GTP; sequence SKID. The interval 255-274 is disordered; the sequence is SESQEPKEPVEEIEEEVDFE. Residues 265–274 show a composition bias toward acidic residues; sequence EEIEEEVDFE.

This sequence belongs to the GPN-loop GTPase family. In terms of assembly, heterodimers with GPN1 or GPN2. Binds to RNA polymerase II (RNAPII).

In terms of biological role, small GTPase required for proper nuclear import of RNA polymerase II and III (RNAPII and RNAPIII). May act at an RNAP assembly step prior to nuclear import. The chain is GPN-loop GTPase 3 from Debaryomyces hansenii (strain ATCC 36239 / CBS 767 / BCRC 21394 / JCM 1990 / NBRC 0083 / IGC 2968) (Yeast).